A 506-amino-acid chain; its full sequence is 2,3-bisphosphoglycerate-independent phosphoglycerate mutase (506 aa).

Mn(2+)-binding residues include D9 and S59. S59 serves as the catalytic Phosphoserine intermediate. Residues H120, 149–150 (RD), R181, R187, 254–257 (RADR), and K327 contribute to the substrate site. Mn(2+) is bound by residues D394, H398, D435, H436, and H452.

Belongs to the BPG-independent phosphoglycerate mutase family. Mn(2+) serves as cofactor.

The enzyme catalyses (2R)-2-phosphoglycerate = (2R)-3-phosphoglycerate. The protein operates within carbohydrate degradation; glycolysis; pyruvate from D-glyceraldehyde 3-phosphate: step 3/5. Catalyzes the interconversion of 2-phosphoglycerate and 3-phosphoglycerate. This Natronomonas pharaonis (strain ATCC 35678 / DSM 2160 / CIP 103997 / JCM 8858 / NBRC 14720 / NCIMB 2260 / Gabara) (Halobacterium pharaonis) protein is 2,3-bisphosphoglycerate-independent phosphoglycerate mutase.